We begin with the raw amino-acid sequence, 140 residues long: Large ribosomal subunit protein uL11 (140 aa).

The protein belongs to the universal ribosomal protein uL11 family. In terms of assembly, part of the ribosomal stalk of the 50S ribosomal subunit. Interacts with L10 and the large rRNA to form the base of the stalk. L10 forms an elongated spine to which L12 dimers bind in a sequential fashion forming a multimeric L10(L12)X complex. Post-translationally, one or more lysine residues are methylated.

Functionally, forms part of the ribosomal stalk which helps the ribosome interact with GTP-bound translation factors. The polypeptide is Large ribosomal subunit protein uL11 (Dehalococcoides mccartyi (strain CBDB1)).